Reading from the N-terminus, the 443-residue chain is D(2) dopamine receptor (443 aa).

The Extracellular portion of the chain corresponds to 1-37 (MDPLNLSWYDDDLERQNWSRPFNGSDGKADRPHYNYY). 3 N-linked (GlcNAc...) asparagine glycosylation sites follow: N5, N17, and N23. Residues 38-60 (ATLLTLLIAVIVFGNVLVCMAVS) traverse the membrane as a helical segment. The Cytoplasmic segment spans residues 61 to 70 (REKALQTTTN). A helical membrane pass occupies residues 71-93 (YLIVSLAVADLLVATLVMPWVVY). Over 94 to 108 (LEVVGEWKFSRIHCD) the chain is Extracellular. C107 and C182 are oxidised to a cystine. A helical transmembrane segment spans residues 109 to 130 (IFVTLDVMMCTASILNLCAISI). Residues 131 to 151 (DRYTAVAMPMLYNTRYSSKRR) lie on the Cytoplasmic side of the membrane. A helical membrane pass occupies residues 152 to 172 (VTVMISIVWVLSFTISCPLLF). The Extracellular portion of the chain corresponds to 173-188 (GLNNADQNECIIANPA). A helical membrane pass occupies residues 189 to 213 (FVVYSSIVSFYVPFIVTLLVYIKIY). An interaction with PPP1R9B region spans residues 211–373 (KIYIVLRRRR…SQQKEKKATQ (163 aa)). Over 214 to 373 (IVLRRRRKRV…SQQKEKKATQ (160 aa)) the chain is Cytoplasmic. The tract at residues 281 to 332 (MEMLSSTSPPERTRYSPIPPSHHQLTLPDPSHHGLHSTPDSPAKPEKNGHAK) is disordered. Over residues 323-332 (AKPEKNGHAK) the composition is skewed to basic and acidic residues. A helical transmembrane segment spans residues 374 to 395 (MLAIVLGVFIICWLPFFITHIL). Over 396–409 (NIHCDCNIPPVLYS) the chain is Extracellular. C399 and C401 are disulfide-bonded. A helical transmembrane segment spans residues 410 to 431 (AFTWLGYVNSAVNPIIYTTFNI). Topologically, residues 432–443 (EFRKAFLKILHC) are cytoplasmic. Residue C443 is the site of S-palmitoyl cysteine attachment.

Belongs to the G-protein coupled receptor 1 family. As to quaternary structure, forms homo- and heterooligomers with DRD4. The interaction with DRD4 may modulate agonist-induced downstream signaling. Interacts with CADPS and CADPS2. Interacts with GPRASP1, PPP1R9B and CLIC6. Interacts with ARRB2. Interacts with HTR2A. Interacts with GNAI2 isoform sGi2, the interaction allows the creation of an intracellular pool of DRD2 that can be released to cell surface upon agonist stimulation. Interacts with DRD1. Interacts with KCNA2. Palmitoylated. Palmitoylation which is required for proper localization to the plasma membrane and stability of the receptor could be carried on by ZDHHC4, ZDHHC3 and ZDHHC8. In terms of tissue distribution, expressed in the anterior pituitary gland.

It is found in the cell membrane. Its subcellular location is the golgi apparatus membrane. Functionally, dopamine receptor whose activity is mediated by G proteins which inhibit adenylyl cyclase. Positively regulates postnatal regression of retinal hyaloid vessels via suppression of VEGFR2/KDR activity, downstream of OPN5. The protein is D(2) dopamine receptor (DRD2) of Homo sapiens (Human).